A 262-amino-acid polypeptide reads, in one-letter code: Type II pantothenate kinase (262 aa).

7-14 (DAGGSLVK) is an ATP binding site. Glu-71 serves as the catalytic Proton acceptor. ATP contacts are provided by residues Thr-101, 119 to 123 (GGLLT), and Tyr-135.

Belongs to the type II pantothenate kinase family. As to quaternary structure, homodimer.

The protein localises to the cytoplasm. It catalyses the reaction (R)-pantothenate + ATP = (R)-4'-phosphopantothenate + ADP + H(+). It functions in the pathway cofactor biosynthesis; coenzyme A biosynthesis; CoA from (R)-pantothenate: step 1/5. In terms of biological role, catalyzes the phosphorylation of pantothenate (Pan), the first step in CoA biosynthesis. The polypeptide is Type II pantothenate kinase (Oceanobacillus iheyensis (strain DSM 14371 / CIP 107618 / JCM 11309 / KCTC 3954 / HTE831)).